The primary structure comprises 243 residues: Probable fructoselysine utilization operon transcriptional repressor (243 aa).

Residues 10-78 (QLLYATVRQR…QGKGTFVQSQ (69 aa)) form the HTH gntR-type domain. The segment at residues 38–57 (ENELCTQYNVSRITIRKAIS) is a DNA-binding region (H-T-H motif).

It functions in the pathway carbohydrate metabolism; fructoselysine degradation [regulation]. May regulate the transcription of the frlABCDR operon, involved in the utilization of fructoselysine and psicoselysine. The sequence is that of Probable fructoselysine utilization operon transcriptional repressor (frlR) from Shigella flexneri.